We begin with the raw amino-acid sequence, 69 residues long: Large ribosomal subunit protein uL29 (69 aa).

The protein belongs to the universal ribosomal protein uL29 family.

This Natronomonas pharaonis (strain ATCC 35678 / DSM 2160 / CIP 103997 / JCM 8858 / NBRC 14720 / NCIMB 2260 / Gabara) (Halobacterium pharaonis) protein is Large ribosomal subunit protein uL29.